Reading from the N-terminus, the 517-residue chain is GMP synthase [glutamine-hydrolyzing] (517 aa).

The Glutamine amidotransferase type-1 domain maps to 11–202 (KIIVLDFGSQ…AFNVCDAKAN (192 aa)). The active-site Nucleophile is the cysteine 88. Residues histidine 176 and glutamate 178 contribute to the active site. In terms of domain architecture, GMPS ATP-PPase spans 203 to 392 (WTMDDFIEMQ…LGIPHDLVWR (190 aa)). 230 to 236 (SGGVDSS) contributes to the ATP binding site.

In terms of assembly, homodimer.

It carries out the reaction XMP + L-glutamine + ATP + H2O = GMP + L-glutamate + AMP + diphosphate + 2 H(+). Its pathway is purine metabolism; GMP biosynthesis; GMP from XMP (L-Gln route): step 1/1. Its function is as follows. Catalyzes the synthesis of GMP from XMP. This Lactobacillus gasseri (strain ATCC 33323 / DSM 20243 / BCRC 14619 / CIP 102991 / JCM 1131 / KCTC 3163 / NCIMB 11718 / NCTC 13722 / AM63) protein is GMP synthase [glutamine-hydrolyzing].